Here is a 365-residue protein sequence, read N- to C-terminus: TD and POZ domain-containing protein 1 (365 aa).

The MATH domain occupies 19–149 (KFCYKWTISN…EDQLTICCKV (131 aa)). Residues 188 to 250 (TDCCLLVAGH…EMMGFIYTGK (63 aa)) enclose the BTB domain.

It belongs to the Tdpoz family.

In Mus musculus (Mouse), this protein is TD and POZ domain-containing protein 1.